The following is a 766-amino-acid chain: Protein sak1 (766 aa).

Residues glycine 101 to glycine 176 constitute a DNA-binding region (RFX-type winged-helix). A phosphoserine mark is found at serine 223, serine 224, and serine 227. 2 disordered regions span residues proline 271–tyrosine 308 and leucine 708–glutamine 731. The segment covering histidine 279–leucine 289 has biased composition (polar residues). Composition is skewed to low complexity over residues serine 290–tyrosine 308 and glutamine 715–glutamine 731.

It belongs to the RFX family.

The protein localises to the nucleus. Positively regulates cyclic AMP-dependent protein kinase-mediated exit from the mitotic cell cycle. This Schizosaccharomyces pombe (strain 972 / ATCC 24843) (Fission yeast) protein is Protein sak1 (sak1).